A 333-amino-acid chain; its full sequence is Ketol-acid reductoisomerase (NADP(+)) (333 aa).

The 181-residue stretch at 6-186 folds into the KARI N-terminal Rossmann domain; the sequence is TRVYTECDAD…GALRAGAIQT (181 aa). NADP(+) contacts are provided by residues 29–32, Lys52, Ser55, Ser57, and 87–90; these read YGSQ and DPAQ. His112 is a catalytic residue. An NADP(+)-binding site is contributed by Gly138. One can recognise a KARI C-terminal knotted domain in the interval 187–332; sequence TFTEETETDL…ARLRALFSWS (146 aa). 4 residues coordinate Mg(2+): Asp195, Glu199, Glu231, and Glu235. Ser256 contacts substrate.

The protein belongs to the ketol-acid reductoisomerase family. Mg(2+) is required as a cofactor.

It carries out the reaction (2R)-2,3-dihydroxy-3-methylbutanoate + NADP(+) = (2S)-2-acetolactate + NADPH + H(+). The catalysed reaction is (2R,3R)-2,3-dihydroxy-3-methylpentanoate + NADP(+) = (S)-2-ethyl-2-hydroxy-3-oxobutanoate + NADPH + H(+). The protein operates within amino-acid biosynthesis; L-isoleucine biosynthesis; L-isoleucine from 2-oxobutanoate: step 2/4. Its pathway is amino-acid biosynthesis; L-valine biosynthesis; L-valine from pyruvate: step 2/4. In terms of biological role, involved in the biosynthesis of branched-chain amino acids (BCAA). Catalyzes an alkyl-migration followed by a ketol-acid reduction of (S)-2-acetolactate (S2AL) to yield (R)-2,3-dihydroxy-isovalerate. In the isomerase reaction, S2AL is rearranged via a Mg-dependent methyl migration to produce 3-hydroxy-3-methyl-2-ketobutyrate (HMKB). In the reductase reaction, this 2-ketoacid undergoes a metal-dependent reduction by NADPH to yield (R)-2,3-dihydroxy-isovalerate. In Tropheryma whipplei (strain Twist) (Whipple's bacillus), this protein is Ketol-acid reductoisomerase (NADP(+)).